Reading from the N-terminus, the 458-residue chain is Transmembrane protein 135 (458 aa).

A run of 6 helical transmembrane segments spans residues 68-88 (ILQS…FFCI), 96-116 (FYLW…AILV), 149-169 (TLRN…MFFF), 298-318 (FQLG…SCFL), 331-351 (IIAG…TISM), and 380-400 (IIYS…VQTL).

It belongs to the TMEM135 family.

It is found in the mitochondrion membrane. It localises to the peroxisome membrane. In terms of biological role, involved in mitochondrial metabolism by regulating the balance between mitochondrial fusion and fission. May act as a regulator of mitochondrial fission that promotes DNM1L-dependent fission through activation of DNM1L. May be involved in peroxisome organization. The protein is Transmembrane protein 135 of Bos taurus (Bovine).